Here is a 360-residue protein sequence, read N- to C-terminus: Alanine racemase (360 aa).

The active-site Proton acceptor; specific for D-alanine is Lys34. Residue Lys34 is modified to N6-(pyridoxal phosphate)lysine. Arg129 serves as a coordination point for substrate. Tyr254 acts as the Proton acceptor; specific for L-alanine in catalysis. Met302 lines the substrate pocket.

The protein belongs to the alanine racemase family. The cofactor is pyridoxal 5'-phosphate.

It carries out the reaction L-alanine = D-alanine. It participates in amino-acid biosynthesis; D-alanine biosynthesis; D-alanine from L-alanine: step 1/1. Functionally, catalyzes the interconversion of L-alanine and D-alanine. May also act on other amino acids. The protein is Alanine racemase (alr) of Pectobacterium carotovorum subsp. carotovorum (strain PC1).